The primary structure comprises 259 residues: 5'-nucleotidase SurE (259 aa).

4 residues coordinate a divalent metal cation: Asp-8, Asp-9, Ser-40, and Asn-95.

The protein belongs to the SurE nucleotidase family. A divalent metal cation serves as cofactor.

It is found in the cytoplasm. It catalyses the reaction a ribonucleoside 5'-phosphate + H2O = a ribonucleoside + phosphate. Its function is as follows. Nucleotidase that shows phosphatase activity on nucleoside 5'-monophosphates. This Oleidesulfovibrio alaskensis (strain ATCC BAA-1058 / DSM 17464 / G20) (Desulfovibrio alaskensis) protein is 5'-nucleotidase SurE.